The primary structure comprises 636 residues: MGRLLDTIDSPADLKKVPVEQLPALCQEIRELIIQTCARNGGHLGSSLGAVEINVALHHVFASPQDKLVWDVGHQAYAHKLLTGRRDAFRTIRTEGGLAGFPERHESAHDAFGVGHASTAISAALGMIEAKRVTGEPGKVVAVVGDGAMTGGVAFEGLNQAGYLGRNLLVVLNDNEMSISPNVGALSEWFSKKFASRTYNRWRRQVKEFLESVPKGPEAIGIIRHGINATKALVTPGILFEGLGFHYVGPVDGHDVKGLVETFQKLAVFDGPVLLHAITTKGKGYHPAESDKATRGHGLSFFDVATGKPVKKSPGAKAYTDLFAEALCEEMEHDPRVVAITAAMLEGTGLIKAKQRFPDRTYDVGIAEQHAVTFAAGLACEGIRPVVAIYSTFLQRAYDQIIHDVALQKLPVTFALDRGGLVGADGKTHQGAFDLAYLRCVPGLVLMAPSDENELRHMLHTSLQHDGPAALRYPRGAGEGVPLEPARVLEIGKGRLVRNVPGKPDVCVVAAGTTLKAALAAAEALAAEGVAVTVVDPRFVKPLDEALICAEAARAKRVVTVEEGCLAGGFGTACLEAFERHGLLEAGLGVRRLGIPDEFITHAEQAKQRAWVGIDAEAIAAACRALVGDRKARGVA.

Residues histidine 74 and 115–117 each bind thiamine diphosphate; that span reads GHA. Aspartate 146 is a binding site for Mg(2+). Residues 147–148, asparagine 175, tyrosine 285, and glutamate 368 contribute to the thiamine diphosphate site; that span reads GA. Asparagine 175 is a Mg(2+) binding site.

It belongs to the transketolase family. DXPS subfamily. As to quaternary structure, homodimer. The cofactor is Mg(2+). Thiamine diphosphate is required as a cofactor.

The enzyme catalyses D-glyceraldehyde 3-phosphate + pyruvate + H(+) = 1-deoxy-D-xylulose 5-phosphate + CO2. It participates in metabolic intermediate biosynthesis; 1-deoxy-D-xylulose 5-phosphate biosynthesis; 1-deoxy-D-xylulose 5-phosphate from D-glyceraldehyde 3-phosphate and pyruvate: step 1/1. Functionally, catalyzes the acyloin condensation reaction between C atoms 2 and 3 of pyruvate and glyceraldehyde 3-phosphate to yield 1-deoxy-D-xylulose-5-phosphate (DXP). This chain is 1-deoxy-D-xylulose-5-phosphate synthase, found in Anaeromyxobacter dehalogenans (strain 2CP-C).